The chain runs to 394 residues: Nuclear hormone receptor family member nhr-103 (394 aa).

Residues 8 to 83 (SGPCEICGQK…VGMDSKKFQT (76 aa)) constitute a DNA-binding region (nuclear receptor). The NR C4-type zinc finger occupies 11–31 (CEICGQKTSGRHFGVLSCRSC). The segment at 47–66 (QCVKGTCKIFEDGKFNCKQC) adopts an NR C4-type; degenerate zinc-finger fold. The 269-residue stretch at 126–394 (YLVDMAKNLL…FSHPEMFETT (269 aa)) folds into the NR LBD domain.

The protein belongs to the nuclear hormone receptor family.

It localises to the nucleus. In terms of biological role, orphan nuclear receptor. The protein is Nuclear hormone receptor family member nhr-103 (nhr-103) of Caenorhabditis elegans.